The following is a 235-amino-acid chain: Endonuclease V (235 aa).

Mg(2+)-binding residues include Asp45 and Asp115.

Belongs to the endonuclease V family. Mg(2+) is required as a cofactor.

Its subcellular location is the cytoplasm. The catalysed reaction is Endonucleolytic cleavage at apurinic or apyrimidinic sites to products with a 5'-phosphate.. Its function is as follows. DNA repair enzyme involved in the repair of deaminated bases. Selectively cleaves double-stranded DNA at the second phosphodiester bond 3' to a deoxyinosine leaving behind the intact lesion on the nicked DNA. This chain is Endonuclease V, found in Bacillus thuringiensis subsp. konkukian (strain 97-27).